The chain runs to 294 residues: Glyceraldehyde-3-phosphate dehydrogenase (294 aa).

Residues aspartate 19, lysine 63, and threonine 105 each contribute to the NAD(+) site. Residues 134–136, threonine 165, 194–195, and arginine 217 each bind D-glyceraldehyde 3-phosphate; these read SCT and TG. The Nucleophile role is filled by cysteine 135.

Belongs to the glyceraldehyde-3-phosphate dehydrogenase family. Homotetramer.

The protein resides in the cytoplasm. The enzyme catalyses D-glyceraldehyde 3-phosphate + phosphate + NAD(+) = (2R)-3-phospho-glyceroyl phosphate + NADH + H(+). Its pathway is carbohydrate degradation; glycolysis; pyruvate from D-glyceraldehyde 3-phosphate: step 1/5. Its function is as follows. Catalyzes the oxidative phosphorylation of glyceraldehyde 3-phosphate (G3P) to 1,3-bisphosphoglycerate (BPG) using the cofactor NAD. The first reaction step involves the formation of a hemiacetal intermediate between G3P and a cysteine residue, and this hemiacetal intermediate is then oxidized to a thioester, with concomitant reduction of NAD to NADH. The reduced NADH is then exchanged with the second NAD, and the thioester is attacked by a nucleophilic inorganic phosphate to produce BPG. This chain is Glyceraldehyde-3-phosphate dehydrogenase (gap), found in Serratia odorifera.